The following is a 470-amino-acid chain: Leucine-rich repeat extensin-like protein 6 (470 aa).

Positions 1–28 (MREDTFFFQWWFLVSGLSFIFLLPQAFT) are cleaved as a signal peptide. N-linked (GlcNAc...) asparagine glycosylation is present at N83. 10 LRR repeats span residues 98 to 122 (VLTVAGIDLNHANIAGYLPLELGLL), 123 to 146 (TDLALFHINSNRFQGQLPKTLKCL), 147 to 170 (HLLHELDVSNNKLSGEFPSVIFSL), 171 to 194 (PSLKFLDIRFNEFQGDVPSQLFDL), 196 to 217 (LDALFINDNKFQFRLPRNIGNS), 219 to 241 (VSVLVLANNDLQGSCVPPSFYKM), 243 to 265 (KTLHEIIITNSQLTGCLNREIGL), 266 to 290 (LNQLTVFDVSYNNLVGSLPETIGDM), 291 to 314 (KSLEQLNIAHNKFSGYIPESICRL), and 316 to 337 (RLENFTYSYNFFSGEPPACLRL). N319 carries N-linked (GlcNAc...) asparagine glycosylation. A disordered region spans residues 378–411 (SPPPPPPPPPPPPPPPPPPPPPPPPPPPPPYVYP). The tract at residues 378–470 (SPPPPPPPPP…CNDLPTPVHY (93 aa)) is contains the Ser-Pro(4) repeats.

Post-translationally, hydroxylated on proline residues in the S-P-P-P-P repeat. In terms of processing, O-glycosylated on hydroxyprolines. In terms of tissue distribution, expressed in roots.

It is found in the secreted. The protein resides in the cell wall. In terms of biological role, modulates cell morphogenesis by regulating cell wall formation and assembly, and/or growth polarization. This is Leucine-rich repeat extensin-like protein 6 (LRX6) from Arabidopsis thaliana (Mouse-ear cress).